Here is a 780-residue protein sequence, read N- to C-terminus: Cation channel sperm-associated protein 1 (780 aa).

Disordered stretches follow at residues 1–37 (MDQN…PGHS), 71–306 (LSSH…QDHH), and 376–412 (QMSK…LQRT). Over 1 to 447 (MDQNSVPEKA…EMIRNLTQSL (447 aa)) the chain is Cytoplasmic. The span at 110–122 (SYGEDYHDELQRD) shows a compositional bias: basic and acidic residues. Residues 211–241 (QVPHRGWPHHHQVHHHGRSRHHEAHQHGKSP) are compositionally biased toward basic residues. Over residues 261 to 284 (SDYHSEYHQGDHHPSEYHHGDHPH) the composition is skewed to basic and acidic residues. Residues 285–299 (HTQHHYHQTHRHRDY) show a composition bias toward basic residues. Residues 387-401 (STKHSEDWGKEEGQF) are compositionally biased toward basic and acidic residues. The segment covering 402 to 412 (QKRKTGRLQRT) has biased composition (basic residues). Residues 448–469 (AFETFIFFVVCLNTVMLVAQTF) traverse the membrane as a helical segment. The Extracellular portion of the chain corresponds to 470 to 478 (AEVEIRGEW). The chain crosses the membrane as a helical span at residues 479 to 500 (YFMALDSIFFCIYVVEALLKII). Topologically, residues 501-508 (ALGLSYFF) are cytoplasmic. The chain crosses the membrane as a helical span at residues 509–531 (DFWNNLDFFIMAMAVLDFLLMQT). The Extracellular segment spans residues 532–540 (HSFAIYHQS). The chain crosses the membrane as a helical span at residues 541-563 (LFRILKVFKSLRALRAIRVLRRL). Over 564–581 (SFLTSVQEVTGTLGQSLP) the chain is Cytoplasmic. A helical transmembrane segment spans residues 582-604 (SIAAILILMFTCLFLFSAVLRAL). Residues 605-615 (FRKSDPKRFQN) are Extracellular-facing. Positions 616–628 (IFTTIFTLFTLLT) form an intramembrane region, helical; Pore-forming. The Extracellular portion of the chain corresponds to 629 to 645 (LDDWSLIYMDSRAQGAW). A helical transmembrane segment spans residues 646–671 (YIIPILVIYIIIQYFIFLNLVITVLV). Residues 672–780 (DSFQTALFKG…FEAGEEDFRN (109 aa)) lie on the Cytoplasmic side of the membrane.

It belongs to the cation channel sperm-associated (TC 1.A.1.19) family. Component of the CatSper complex or CatSpermasome composed of the core pore-forming members CATSPER1, CATSPER2, CATSPER3 and CATSPER4 as well as auxiliary members CATSPERB, CATSPERG, CATSPERD, CATSPERE, CATSPERZ, C2CD6/CATSPERT, TMEM249, TMEM262 and EFCAB9. HSPA1 may be an additional auxiliary complex member. The core complex members CATSPER1, CATSPER2, CATSPER3 and CATSPER4 form a heterotetrameric channel. The auxiliary CATSPERB, CATSPERG, CATSPERD and CATSPERE subunits form a pavilion-like structure over the pore which stabilizes the complex through interactions with CATSPER4, CATSPER3, CATSPER1 and CATSPER2 respectively. TMEM262/CATSPERH interacts with CATSPERB, further stabilizing the complex. C2CD6/CATSPERT interacts at least with CATSPERD and is required for targeting the CatSper complex in the flagellar membrane. Interacts with Ca(v)3.3/CACNA1I, leading to suppression of T-type calcium channel activity. Testis-specific.

The protein localises to the cell projection. It is found in the cilium. The protein resides in the flagellum membrane. It carries out the reaction Ca(2+)(in) = Ca(2+)(out). The CatSper calcium channel is indirectly activated by extracellular progesterone and prostaglandins following the sequence: progesterone &gt; PGF1-alpha = PGE1 &gt; PGA1 &gt; PGE2 &gt;&gt; PGD2. The CatSper calcium channel is directly inhibited by endocannabinoid 2-arachidonoylglycerol (2AG). Indirect activation by progesterone takes place via the following mechanism: progesterone binds and activates the acylglycerol lipase ABHD2, which in turn mediates hydrolysis of 2AG inhibitor, relieving inhibition of the CatSper channel. The primary effect of progesterone activation is to shift voltage dependence towards more physiological, negative membrane potentials; it is not mediated by metabotropic receptors and second messengers. Sperm capacitation enhances the effect of progesterone by providing additional negative shift. Also activated by the elevation of intracellular pH. Its function is as follows. Pore-forming subunit of the CatSper complex, a sperm-specific voltage-gated calcium channel that plays a central role in calcium-dependent physiological responses essential for successful fertilization, such as sperm hyperactivation, acrosome reaction and chemotaxis towards the oocyte. The polypeptide is Cation channel sperm-associated protein 1 (CATSPER1) (Homo sapiens (Human)).